The sequence spans 424 residues: Serine--tRNA ligase (424 aa).

233–235 (TAE) is an L-serine binding site. 264-266 (RRE) provides a ligand contact to ATP. Glu287 provides a ligand contact to L-serine. Position 351–354 (351–354 (EISS)) interacts with ATP. Ser386 lines the L-serine pocket.

The protein belongs to the class-II aminoacyl-tRNA synthetase family. Type-1 seryl-tRNA synthetase subfamily. As to quaternary structure, homodimer. The tRNA molecule binds across the dimer.

The protein resides in the cytoplasm. The catalysed reaction is tRNA(Ser) + L-serine + ATP = L-seryl-tRNA(Ser) + AMP + diphosphate + H(+). The enzyme catalyses tRNA(Sec) + L-serine + ATP = L-seryl-tRNA(Sec) + AMP + diphosphate + H(+). The protein operates within aminoacyl-tRNA biosynthesis; selenocysteinyl-tRNA(Sec) biosynthesis; L-seryl-tRNA(Sec) from L-serine and tRNA(Sec): step 1/1. Catalyzes the attachment of serine to tRNA(Ser). Is also able to aminoacylate tRNA(Sec) with serine, to form the misacylated tRNA L-seryl-tRNA(Sec), which will be further converted into selenocysteinyl-tRNA(Sec). The chain is Serine--tRNA ligase from Petrotoga mobilis (strain DSM 10674 / SJ95).